The chain runs to 30 residues: Elongation factor 1-delta (30 aa).

Belongs to the EF-1-beta/EF-1-delta family. In terms of assembly, EF-1 is composed of 4 subunits: alpha, beta (1B-alpha=beta'), delta (1B-beta), and gamma (1B-gamma).

EF-1-beta and EF-1-delta stimulate the exchange of GDP bound to EF-1-alpha to GTP. The protein is Elongation factor 1-delta of Populus euphratica (Euphrates poplar).